We begin with the raw amino-acid sequence, 336 residues long: Phenylalanine--tRNA ligase alpha subunit (336 aa).

Glutamate 251 serves as a coordination point for Mg(2+).

Belongs to the class-II aminoacyl-tRNA synthetase family. Phe-tRNA synthetase alpha subunit type 1 subfamily. Tetramer of two alpha and two beta subunits. Mg(2+) serves as cofactor.

The protein resides in the cytoplasm. The enzyme catalyses tRNA(Phe) + L-phenylalanine + ATP = L-phenylalanyl-tRNA(Phe) + AMP + diphosphate + H(+). This Syntrophobacter fumaroxidans (strain DSM 10017 / MPOB) protein is Phenylalanine--tRNA ligase alpha subunit.